Here is a 71-residue protein sequence, read N- to C-terminus: Small ribosomal subunit protein bS21 (71 aa).

Residues His-37–Tyr-71 are disordered. Residues Arg-45–Tyr-71 are compositionally biased toward basic residues.

The protein belongs to the bacterial ribosomal protein bS21 family.

This chain is Small ribosomal subunit protein bS21, found in Alkalilimnicola ehrlichii (strain ATCC BAA-1101 / DSM 17681 / MLHE-1).